Reading from the N-terminus, the 454-residue chain is Bifunctional protein GlmU (454 aa).

Positions 1–226 (MSLNVVILAA…AIEVEGANNR (226 aa)) are pyrophosphorylase. Residues 8-11 (LAAG), Lys22, Gln73, 78-79 (GT), 100-102 (YGD), Gly137, Glu151, Asn166, and Asn224 contribute to the UDP-N-acetyl-alpha-D-glucosamine site. Asp102 is a binding site for Mg(2+). Asn224 is a binding site for Mg(2+). Residues 227–247 (VQLAQLERAYQARAAEKMMLE) form a linker region. The tract at residues 248 to 454 (GANLRDPARI…GWQRPIKIKK (207 aa)) is N-acetyltransferase. Positions 330 and 348 each coordinate UDP-N-acetyl-alpha-D-glucosamine. Residue His360 is the Proton acceptor of the active site. Residues Tyr363 and Asn374 each coordinate UDP-N-acetyl-alpha-D-glucosamine. Residues Ala377, 383 to 384 (NY), Ser402, Ala420, and Arg437 each bind acetyl-CoA.

The protein in the N-terminal section; belongs to the N-acetylglucosamine-1-phosphate uridyltransferase family. In the C-terminal section; belongs to the transferase hexapeptide repeat family. Homotrimer. It depends on Mg(2+) as a cofactor.

The protein resides in the cytoplasm. It catalyses the reaction alpha-D-glucosamine 1-phosphate + acetyl-CoA = N-acetyl-alpha-D-glucosamine 1-phosphate + CoA + H(+). The enzyme catalyses N-acetyl-alpha-D-glucosamine 1-phosphate + UTP + H(+) = UDP-N-acetyl-alpha-D-glucosamine + diphosphate. The protein operates within nucleotide-sugar biosynthesis; UDP-N-acetyl-alpha-D-glucosamine biosynthesis; N-acetyl-alpha-D-glucosamine 1-phosphate from alpha-D-glucosamine 6-phosphate (route II): step 2/2. It functions in the pathway nucleotide-sugar biosynthesis; UDP-N-acetyl-alpha-D-glucosamine biosynthesis; UDP-N-acetyl-alpha-D-glucosamine from N-acetyl-alpha-D-glucosamine 1-phosphate: step 1/1. Its pathway is bacterial outer membrane biogenesis; LPS lipid A biosynthesis. In terms of biological role, catalyzes the last two sequential reactions in the de novo biosynthetic pathway for UDP-N-acetylglucosamine (UDP-GlcNAc). The C-terminal domain catalyzes the transfer of acetyl group from acetyl coenzyme A to glucosamine-1-phosphate (GlcN-1-P) to produce N-acetylglucosamine-1-phosphate (GlcNAc-1-P), which is converted into UDP-GlcNAc by the transfer of uridine 5-monophosphate (from uridine 5-triphosphate), a reaction catalyzed by the N-terminal domain. This chain is Bifunctional protein GlmU, found in Shewanella frigidimarina (strain NCIMB 400).